The chain runs to 476 residues: Glycogen synthase (476 aa).

K15 is an ADP-alpha-D-glucose binding site.

Belongs to the glycosyltransferase 1 family. Bacterial/plant glycogen synthase subfamily.

It catalyses the reaction [(1-&gt;4)-alpha-D-glucosyl](n) + ADP-alpha-D-glucose = [(1-&gt;4)-alpha-D-glucosyl](n+1) + ADP + H(+). It functions in the pathway glycan biosynthesis; glycogen biosynthesis. Functionally, synthesizes alpha-1,4-glucan chains using ADP-glucose. The polypeptide is Glycogen synthase (Chlamydia pneumoniae (Chlamydophila pneumoniae)).